The following is a 401-amino-acid chain: Large ribosomal subunit protein uL3 (401 aa).

The disordered stretch occupies residues 1-21; the sequence is MSHRKFSAPRHGHMGFTPKKR.

It belongs to the universal ribosomal protein uL3 family.

It is found in the cytoplasm. Its function is as follows. The L3 protein is a component of the large subunit of cytoplasmic ribosomes. This is Large ribosomal subunit protein uL3 (rpl-3) from Caenorhabditis briggsae.